A 366-amino-acid polypeptide reads, in one-letter code: Tetraacyldisaccharide 4'-kinase (366 aa).

Residue 51-58 participates in ATP binding; sequence TVGGTGKT.

The protein belongs to the LpxK family.

It catalyses the reaction a lipid A disaccharide + ATP = a lipid IVA + ADP + H(+). It functions in the pathway glycolipid biosynthesis; lipid IV(A) biosynthesis; lipid IV(A) from (3R)-3-hydroxytetradecanoyl-[acyl-carrier-protein] and UDP-N-acetyl-alpha-D-glucosamine: step 6/6. Transfers the gamma-phosphate of ATP to the 4'-position of a tetraacyldisaccharide 1-phosphate intermediate (termed DS-1-P) to form tetraacyldisaccharide 1,4'-bis-phosphate (lipid IVA). The sequence is that of Tetraacyldisaccharide 4'-kinase from Phocaeicola vulgatus (strain ATCC 8482 / DSM 1447 / JCM 5826 / CCUG 4940 / NBRC 14291 / NCTC 11154) (Bacteroides vulgatus).